A 388-amino-acid polypeptide reads, in one-letter code: MTQFTLADRLATLPPYLFAQIDKVKAEVAARGVDIISLGIGDPDMPTPDFVIEALKKAAEKPANHQYPSYTGMLAFRQEVANWYKRRYAVELDPKTEVLTLIGSKEGIAHFPTAFVNPGDLVLVCPPCYPVYAIASRFMGGVVQELPLLEENDFLPDLDAVDEATWEKARCIFVNYPNNPTAAMAPRSFFEKLIGIARKHNVIVVHDAAYTEMYYNENNRPLSIMEIPGAMDVAIEFNSLSKPYNMTGWRIAMAVGNASLVAGLGKVKENMDSGAFQAVQEAAIVALRDGDAFLAEIRDIYRKRRDTVIAALNKIGITCRVPEASLYVWARVPEGYTSSDFVTRVLQETGVVMTPGNGFGAAGEGYFRISLTVNDERLEEAVSRIASL.

Positions 16 and 41 each coordinate substrate. Pyridoxal 5'-phosphate-binding positions include Tyr70, Ser104–Lys105, Tyr129, Asn179, Tyr210, and Ser239–Ser241. Substrate is bound by residues Lys105, Tyr129, and Asn179. An N6-(pyridoxal phosphate)lysine modification is found at Lys242. Arg250 is a binding site for pyridoxal 5'-phosphate. Arg368 is a binding site for substrate.

The protein belongs to the class-I pyridoxal-phosphate-dependent aminotransferase family. LL-diaminopimelate aminotransferase subfamily. In terms of assembly, homodimer. Requires pyridoxal 5'-phosphate as cofactor.

It catalyses the reaction (2S,6S)-2,6-diaminopimelate + 2-oxoglutarate = (S)-2,3,4,5-tetrahydrodipicolinate + L-glutamate + H2O + H(+). The protein operates within amino-acid biosynthesis; L-lysine biosynthesis via DAP pathway; LL-2,6-diaminopimelate from (S)-tetrahydrodipicolinate (aminotransferase route): step 1/1. In terms of biological role, involved in the synthesis of meso-diaminopimelate (m-DAP or DL-DAP), required for both lysine and peptidoglycan biosynthesis. Catalyzes the direct conversion of tetrahydrodipicolinate to LL-diaminopimelate. The polypeptide is LL-diaminopimelate aminotransferase (Oleidesulfovibrio alaskensis (strain ATCC BAA-1058 / DSM 17464 / G20) (Desulfovibrio alaskensis)).